The chain runs to 398 residues: Succinate--CoA ligase [ADP-forming] subunit beta (398 aa).

The region spanning 9-253 (KELLKSYGVA…EAEEDPKELE (245 aa)) is the ATP-grasp domain. ATP is bound by residues Lys-46, 53–55 (GRG), Glu-108, Cys-111, and Glu-116. Mg(2+)-binding residues include Asn-208 and Asp-222. Substrate-binding positions include Asn-273 and 330-332 (GIM).

The protein belongs to the succinate/malate CoA ligase beta subunit family. As to quaternary structure, heterotetramer of two alpha and two beta subunits. It depends on Mg(2+) as a cofactor.

It carries out the reaction succinate + ATP + CoA = succinyl-CoA + ADP + phosphate. The catalysed reaction is GTP + succinate + CoA = succinyl-CoA + GDP + phosphate. It participates in carbohydrate metabolism; tricarboxylic acid cycle; succinate from succinyl-CoA (ligase route): step 1/1. In terms of biological role, succinyl-CoA synthetase functions in the citric acid cycle (TCA), coupling the hydrolysis of succinyl-CoA to the synthesis of either ATP or GTP and thus represents the only step of substrate-level phosphorylation in the TCA. The beta subunit provides nucleotide specificity of the enzyme and binds the substrate succinate, while the binding sites for coenzyme A and phosphate are found in the alpha subunit. The chain is Succinate--CoA ligase [ADP-forming] subunit beta from Acidiphilium cryptum (strain JF-5).